Reading from the N-terminus, the 240-residue chain is MSVLKTLVINPRSGVKPTATLFFLHGLGDSSAGWSDVAQMLSQRPSLSHVRFVLPNAPIQPVTLNMGMPMPSWFDILALDDLSGAEDEAGLLKSTDEIKKLIKAENDGTAKDLDGHKIPSERIVVGGFSQGGAISLLTGLTNPTPVAGVAALSTWLPLRAKIATLRTPTSKTLKVFQAHGDADPVVKYEYGQRTVDFLKNELALNDKDVEFHTYPRMPHSACPEEIRDLAAFLEKVIPAQ.

Residues serine 129, aspartate 183, and histidine 219 each act as charge relay system in the active site.

This sequence belongs to the AB hydrolase superfamily. AB hydrolase 2 family.

The protein localises to the cytoplasm. It localises to the nucleus. The catalysed reaction is S-hexadecanoyl-L-cysteinyl-[protein] + H2O = L-cysteinyl-[protein] + hexadecanoate + H(+). Functionally, hydrolyzes fatty acids from S-acylated cysteine residues in proteins with a strong preference for palmitoylated G-alpha proteins over other acyl substrates. Mediates the deacylation of G-alpha proteins such as GPA1 in vivo, but has weak or no activity toward palmitoylated Ras proteins. Has weak lysophospholipase activity in vitro; however such activity may not exist in vivo. In Mycosarcoma maydis (Corn smut fungus), this protein is Acyl-protein thioesterase 1.